Here is a 150-residue protein sequence, read N- to C-terminus: Glycine cleavage system H-like protein gcvH2 (150 aa).

Residues V44–K126 enclose the Lipoyl-binding domain.

It belongs to the GcvH family.

This is Glycine cleavage system H-like protein gcvH2 (gcvH2) from Dictyostelium discoideum (Social amoeba).